A 445-amino-acid polypeptide reads, in one-letter code: KICSTOR subunit 2 (445 aa).

Belongs to the KICS2 family. As to quaternary structure, part of the KICSTOR complex composed of KPTN, ITFG2, KICS2 and SZT2. SZT2 probably serves as a link between the other three proteins in the KICSTOR complex and may mediate the direct interaction with the GATOR complex via GATOR1. The KICSTOR complex interacts directly with the GATOR1 complex and most probably indirectly with the GATOR2 complex in an amino acid-independent manner.

The protein localises to the lysosome membrane. Its function is as follows. As part of the KICSTOR complex functions in the amino acid-sensing branch of the TORC1 signaling pathway. Recruits, in an amino acid-independent manner, the GATOR1 complex to the lysosomal membranes and allows its interaction with GATOR2 and the RAG GTPases. Functions upstream of the RAG GTPases and is required to negatively regulate mTORC1 signaling in absence of amino acids. In absence of the KICSTOR complex mTORC1 is constitutively localized to the lysosome and activated. The KICSTOR complex is also probably involved in the regulation of mTORC1 by glucose. This chain is KICSTOR subunit 2, found in Homo sapiens (Human).